The primary structure comprises 118 residues: uncharacterized protein (118 aa).

This is an uncharacterized protein from Haemophilus influenzae (strain ATCC 51907 / DSM 11121 / KW20 / Rd).